A 212-amino-acid chain; its full sequence is Protein-L-isoaspartate O-methyltransferase (212 aa).

Residue S60 is part of the active site.

Belongs to the methyltransferase superfamily. L-isoaspartyl/D-aspartyl protein methyltransferase family.

It is found in the cytoplasm. The enzyme catalyses [protein]-L-isoaspartate + S-adenosyl-L-methionine = [protein]-L-isoaspartate alpha-methyl ester + S-adenosyl-L-homocysteine. In terms of biological role, catalyzes the methyl esterification of L-isoaspartyl residues in peptides and proteins that result from spontaneous decomposition of normal L-aspartyl and L-asparaginyl residues. It plays a role in the repair and/or degradation of damaged proteins. This Methanococcus maripaludis (strain C7 / ATCC BAA-1331) protein is Protein-L-isoaspartate O-methyltransferase.